The chain runs to 2276 residues: Non-reducing polyketide synthase VdtA (2276 aa).

Residues 8 to 243 are N-terminal acylcarrier protein transacylase (SAT) domain; that stretch reads YLFGDQTYDY…KDIPIHAPYH (236 aa). The region spanning 372–804 is the Ketosynthase family 3 (KS3) domain; sequence RAKIAIVGMS…GGNSSVLVED (433 aa). Catalysis depends on for beta-ketoacyl synthase activity residues Cys-544, His-679, and His-723. The segment at 905-1206 is malonyl-CoA:ACP transacylase (MAT) domain; that stretch reads FTFTGQGAQY…KALPTLQRNR (302 aa). The For acyl/malonyl transferase activity role is filled by Ser-996. The tract at residues 1300 to 1616 is product template (PT) domain; sequence TTTLHRIVDE…PRRVLRYILQ (317 aa). Residues 1304 to 1438 are N-terminal hotdog fold; sequence HRIVDEKSTE…CRIKFSDRST (135 aa). Positions 1304–1612 constitute a PKS/mFAS DH domain; it reads HRIVDEKSTE…IQGVPRRVLR (309 aa). The active-site Proton acceptor; for dehydratase activity is the His-1336. The C-terminal hotdog fold stretch occupies residues 1465-1612; it reads TYRFNGPMAY…IQGVPRRVLR (148 aa). Asp-1525 acts as the Proton donor; for dehydratase activity in catalysis. One can recognise a Carrier 1 domain in the interval 1655 to 1729; sequence SGTLTEALRI…DLKRFFDKIN (75 aa). Position 1689 is an O-(pantetheine 4'-phosphoryl)serine (Ser-1689). The disordered stretch occupies residues 1735-1762; it reads APAPVSDAPKQLQPSSSPVASATPSAPI. The segment covering 1748–1761 has biased composition (low complexity); it reads PSSSPVASATPSAP. In terms of domain architecture, Carrier 2 spans 1765–1839; that stretch reads RSKFESVLNI…DLKAHFMSKN (75 aa). Ser-1799 carries the post-translational modification O-(pantetheine 4'-phosphoryl)serine. Positions 1840–1854 are enriched in polar residues; it reads SDNGSSAVLTPQPSR. The segment at 1840–1882 is disordered; the sequence is SDNGSSAVLTPQPSRDSALPERTRPRVADTSDEEDAPVSANEF. The segment covering 1857–1868 has biased composition (basic and acidic residues); that stretch reads ALPERTRPRVAD. The region spanning 1886 to 1964 is the Carrier 3 domain; that stretch reads ARSTSKYMAV…GLRSFFGFES (79 aa). Ser-1923 bears the O-(pantetheine 4'-phosphoryl)serine mark. Residues 1967–1993 form a disordered region; sequence TATNPTASQSSSSISSGTSVFDTSPSP. A compositionally biased stretch (low complexity) spans 1969-1990; sequence TNPTASQSSSSISSGTSVFDTS. The segment at 2020–2271 is thioesterase (TE) domain; it reads PLPPATSVTL…GADHFSLLVS (252 aa).

The protein resides in the cytoplasmic vesicle. The enzyme catalyses 7 malonyl-CoA + acetyl-CoA + 7 H(+) = 7,9,10-trihydroxy-3-(2-oxopropyl)-1H-benzo[g]isochromen-1-one + 7 CO2 + 8 CoA + 2 H2O. It participates in secondary metabolite biosynthesis. In terms of biological role, non-reducing polyketide synthase; part of the gene cluster that mediates the biosynthesis of viriditoxin, one of the 'classical' secondary metabolites produced by fungi and that has antibacterial activity. The first step is performed by the polyketide synthase VdtA which condenses one acetyl-CoA and 6 malonyl-CoA units to form the heptaketide monomer backbone of viriditoxin. The product of VdtA is then O-methylated on C7 by the O-methyltransferase VdtC. The O-methyl group is important for the stereoselective coupling of the monomers at the final step of viriditoxin biosynthesis. The short-chain dehydrogenase/reductase VdtF then acts as a stereospecific reductase converting the pyrone to dihydropyrone via the reduction of the C3-C4 double bond. The FAD-binding monooxygenase VdtE then converts the ketone group into a methyl-ester group to yield semi-viriditoxin. Finally, the laccase VdtB is involved in dimerization of 2 semi-viriditoxin molecules to yield the final viriditoxin. VdtB is responsible for the regioselective 6,6'-coupling of semi-viriditoxin, which yields (M)-viriditoxin and (P)-viriditoxin at a ratio of 1:2. The non-catalytic carboxylesterase-like protein VdtD affects the stereochemistical outcome of the coupling. The highly reducing polyketide synthase VdtX is not involved in viriditoxin synthesis, but might possibly play a role in the production of additional metabolites not identified yet. This is Non-reducing polyketide synthase VdtA from Byssochlamys spectabilis (Paecilomyces variotii).